Here is a 505-residue protein sequence, read N- to C-terminus: uncharacterized protein (505 aa).

The disordered stretch occupies residues 461–480; it reads RTDVHPGNSDDEGAYSSADS.

The protein to M.jannaschii MJ0787.

This is an uncharacterized protein from Methanothermobacter thermautotrophicus (strain ATCC 29096 / DSM 1053 / JCM 10044 / NBRC 100330 / Delta H) (Methanobacterium thermoautotrophicum).